The primary structure comprises 571 residues: Probable serine/threonine-protein kinase WNK4 (571 aa).

Residues 19–277 form the Protein kinase domain; the sequence is GRFAEILGRG…AKELLQDPFL (259 aa). Residues 99–102 and Lys-149 contribute to the ATP site; that span reads TELF. The Proton acceptor role is filled by Asp-166. The tract at residues 396–425 is disordered; it reads EDDETPHDHHRHRTDSFHSSSSHASSSQAS. Low complexity predominate over residues 412-425; the sequence is FHSSSSHASSSQAS. A Phosphoserine modification is found at Ser-522.

This sequence belongs to the protein kinase superfamily. Ser/Thr protein kinase family. WNK subfamily.

The enzyme catalyses L-seryl-[protein] + ATP = O-phospho-L-seryl-[protein] + ADP + H(+). The catalysed reaction is L-threonyl-[protein] + ATP = O-phospho-L-threonyl-[protein] + ADP + H(+). Its function is as follows. May regulate flowering time by modulating the photoperiod pathway. In Arabidopsis thaliana (Mouse-ear cress), this protein is Probable serine/threonine-protein kinase WNK4 (WNK4).